Reading from the N-terminus, the 494-residue chain is Aspartyl/glutamyl-tRNA(Asn/Gln) amidotransferase subunit B (494 aa).

The protein belongs to the GatB/GatE family. GatB subfamily. As to quaternary structure, heterotrimer of A, B and C subunits.

It catalyses the reaction L-glutamyl-tRNA(Gln) + L-glutamine + ATP + H2O = L-glutaminyl-tRNA(Gln) + L-glutamate + ADP + phosphate + H(+). It carries out the reaction L-aspartyl-tRNA(Asn) + L-glutamine + ATP + H2O = L-asparaginyl-tRNA(Asn) + L-glutamate + ADP + phosphate + 2 H(+). Its function is as follows. Allows the formation of correctly charged Asn-tRNA(Asn) or Gln-tRNA(Gln) through the transamidation of misacylated Asp-tRNA(Asn) or Glu-tRNA(Gln) in organisms which lack either or both of asparaginyl-tRNA or glutaminyl-tRNA synthetases. The reaction takes place in the presence of glutamine and ATP through an activated phospho-Asp-tRNA(Asn) or phospho-Glu-tRNA(Gln). In Rhodopseudomonas palustris (strain BisB18), this protein is Aspartyl/glutamyl-tRNA(Asn/Gln) amidotransferase subunit B.